Reading from the N-terminus, the 113-residue chain is UPF0251 protein TK0562 (113 aa).

Belongs to the UPF0251 family.

This is UPF0251 protein TK0562 from Thermococcus kodakarensis (strain ATCC BAA-918 / JCM 12380 / KOD1) (Pyrococcus kodakaraensis (strain KOD1)).